Consider the following 308-residue polypeptide: Rhamnose-binding lectin (308 aa).

The first 23 residues, 1–23 (MMLILKLSLLSLLIATPGLLVSG), serve as a signal peptide directing secretion. 3 SUEL-type lectin domains span residues 27-115 (ITCY…SFDC), 123-213 (ICEH…YICT), and 218-308 (VCEG…YACV). A glycan (N-linked (GlcNAc...) asparagine) is linked at N110.

As to quaternary structure, homotrimer. Expressed in eggs, but not in liver.

Its subcellular location is the secreted. Its function is as follows. Lectin that binds L-rhamnose. Also binds monosaccharides possessing steric similarity to the hydroxyl group orientation at C2 and C4 of the pyranose ring structure of L-rhamnose, such as L-mannose and L-lyxose. The sequence is that of Rhamnose-binding lectin from Silurus asotus (Amur catfish).